A 403-amino-acid polypeptide reads, in one-letter code: Fasciclin-like arabinogalactan protein 2 (403 aa).

Positions 1–26 (MAYLRRAATALVLIFQLHLFLSLSNA) are cleaved as a signal peptide. FAS1 domains are found at residues 27–174 (HNIT…SQVL) and 187–326 (SDLI…DKVL). N-linked (GlcNAc...) asparagine glycosylation is found at N28, N130, N164, and N248. Residues 338–371 (SAPAPKSSKKKPKNAEADADGPSADAPSDDDVEV) are disordered. A lipid anchor (GPI-anchor amidated alanine) is attached at A378. Residues 379–403 (VSAMITRTSNVVTAIVGLCFGVWLM) constitute a propeptide, removed in mature form.

This sequence belongs to the fasciclin-like AGP family. As to expression, expressed mainly in flowers and to a lesser extent in leaves and roots.

The protein resides in the cell membrane. Its function is as follows. May be a cell surface adhesion protein. The polypeptide is Fasciclin-like arabinogalactan protein 2 (FLA2) (Arabidopsis thaliana (Mouse-ear cress)).